Reading from the N-terminus, the 289-residue chain is DDRGK domain-containing protein 1 (289 aa).

Residues 1-2 (MD) are Lumenal-facing. A helical transmembrane segment spans residues 3–23 (PFILAAIISGIVIIILSIAFL). Residues 24-289 (RVSQVKPQAA…LINLAPVTVP (266 aa)) lie on the Cytoplasmic side of the membrane. The tract at residues 65–168 (RHQAALEEEP…DERKKREQEE (104 aa)) is disordered. Acidic residues predominate over residues 70-85 (LEEEPEIQEEADEGAP). Over residues 87-166 (IDQKIDFDDK…AEDERKKREQ (80 aa)) the composition is skewed to basic and acidic residues.

Belongs to the DDRGK1 family. In terms of assembly, interacts with Atg9; the interaction is transient.

It localises to the endoplasmic reticulum membrane. Functionally, substrate adapter for ufmylation, the covalent attachment of the ubiquitin-like modifier UFM1 to substrate proteins. Required for ufmylation of Atg9; protects the nervous system during aging, possibly by stabilizing Atg9 and supporting its function. In Bombyx mori (Silk moth), this protein is DDRGK domain-containing protein 1.